A 361-amino-acid polypeptide reads, in one-letter code: MSKRAYNFCAGPAALPEAVLQRAQGELLDWHGKGLSVMEMSHRSDEFVSIATKAEQDLRDLLGIPSHYKVLFLQGGASQQFAQIPLNLLPEDGTADYIDTGIWGQKAIEEASRYGHVNVAGTAKPYDYFAIPGQNEWKLSKDAAYVHYVANETIGGLEFDWVPEVGDVPLVCDMSSDILSRPIDVSKYGMIYAGAQKNIGPSGILVNIIREDLLGRARSLCPTMLNYKVAADNGSMYNTPPAFAWYLSGLVFEWLKEQGGVAAMGKLNEEKKRTLYDFIDASGLYSNPINLTDRSWMNVPFRLADDRLDKPFLAGADERGLLNLKGHRSVGGMRASIYNAVDINAIKALIAYMAEFEKEHG.

Arg-43 serves as a coordination point for L-glutamate. Pyridoxal 5'-phosphate-binding positions include 77 to 78, Trp-103, Thr-153, Asp-173, and Gln-196; that span reads AS. Lys-197 is subject to N6-(pyridoxal phosphate)lysine. 238–239 lines the pyridoxal 5'-phosphate pocket; it reads NT.

It belongs to the class-V pyridoxal-phosphate-dependent aminotransferase family. SerC subfamily. As to quaternary structure, homodimer. The cofactor is pyridoxal 5'-phosphate.

Its subcellular location is the cytoplasm. The enzyme catalyses O-phospho-L-serine + 2-oxoglutarate = 3-phosphooxypyruvate + L-glutamate. The catalysed reaction is 4-(phosphooxy)-L-threonine + 2-oxoglutarate = (R)-3-hydroxy-2-oxo-4-phosphooxybutanoate + L-glutamate. It participates in amino-acid biosynthesis; L-serine biosynthesis; L-serine from 3-phospho-D-glycerate: step 2/3. The protein operates within cofactor biosynthesis; pyridoxine 5'-phosphate biosynthesis; pyridoxine 5'-phosphate from D-erythrose 4-phosphate: step 3/5. Catalyzes the reversible conversion of 3-phosphohydroxypyruvate to phosphoserine and of 3-hydroxy-2-oxo-4-phosphonooxybutanoate to phosphohydroxythreonine. The polypeptide is Phosphoserine aminotransferase (Pseudomonas fluorescens (strain SBW25)).